A 434-amino-acid polypeptide reads, in one-letter code: RNA polymerase II holoenzyme cyclin-like subunit (434 aa).

The region spanning 23 to 155 (EARRRVLLLE…LIEEMDSYLL (133 aa)) is the Cyclin N-terminal domain. Low complexity predominate over residues 248–278 (GSSTNPININNNNNTNTSNNNGTTSTTTTTT). 3 disordered regions span residues 248-292 (GSST…DNTE), 301-320 (LTKS…DIDN), and 330-362 (QIQN…GQIS). Low complexity predominate over residues 330–359 (QIQNQTQHQHQESTHNNTSSTNTGRNGING).

Belongs to the cyclin family. Cyclin C subfamily. As to quaternary structure, component of the SRB8-11 complex, a regulatory module of the Mediator complex.

It is found in the nucleus. In terms of biological role, component of the SRB8-11 complex. The SRB8-11 complex is a regulatory module of the Mediator complex which is itself involved in regulation of basal and activated RNA polymerase II-dependent transcription. The SRB8-11 complex may be involved in the transcriptional repression of a subset of genes regulated by Mediator. It may inhibit the association of the Mediator complex with RNA polymerase II to form the holoenzyme complex. The SRB8-11 complex phosphorylates the C-terminal domain (CTD) of the largest subunit of RNA polymerase II. This is RNA polymerase II holoenzyme cyclin-like subunit (SSN8) from Candida albicans (strain SC5314 / ATCC MYA-2876) (Yeast).